Reading from the N-terminus, the 98-residue chain is MSLVHMNVIVAFTLSLVGLLMYRSHLMSALLCMEGMMLSLFVLAALTILNSHFTLASMMPIILLVFAACEAAIGLALLVTISNTYGTDYVQNLNLLQC.

3 consecutive transmembrane segments (helical) span residues 1–21 (MSLV…GLLM), 29–49 (ALLC…LTIL), and 61–81 (IILL…LVTI).

It belongs to the complex I subunit 4L family. As to quaternary structure, core subunit of respiratory chain NADH dehydrogenase (Complex I) which is composed of 45 different subunits.

The protein localises to the mitochondrion inner membrane. It carries out the reaction a ubiquinone + NADH + 5 H(+)(in) = a ubiquinol + NAD(+) + 4 H(+)(out). Its function is as follows. Core subunit of the mitochondrial membrane respiratory chain NADH dehydrogenase (Complex I) which catalyzes electron transfer from NADH through the respiratory chain, using ubiquinone as an electron acceptor. Part of the enzyme membrane arm which is embedded in the lipid bilayer and involved in proton translocation. The polypeptide is NADH-ubiquinone oxidoreductase chain 4L (MT-ND4L) (Ziphius cavirostris (Cuvier's beaked whale)).